Consider the following 155-residue polypeptide: Riboflavin kinase (155 aa).

ATP is bound by residues G15, K21, T27, and N29. Residues T27 and N29 each coordinate Mg(2+). E79 serves as the catalytic Nucleophile. The ATP site is built by I82, H84, and Y91. The FMN site is built by R104, K107, and F109.

As to quaternary structure, monomer. Directly interacts with TNFRSF1A death domain; this interaction may be supported by TRADD. In the absence of TNFRSF1A, interacts with TRADD. Independently of TNFRSF1A, interacts with the NADPH oxidase subunit CYBA. Requires Zn(2+) as cofactor. It depends on Mg(2+) as a cofactor.

Its subcellular location is the cytoplasm. The catalysed reaction is riboflavin + ATP = FMN + ADP + H(+). It participates in cofactor biosynthesis; FMN biosynthesis; FMN from riboflavin (ATP route): step 1/1. Catalyzes the phosphorylation of riboflavin (vitamin B2) to form flavin-mononucleotide (FMN), hence rate-limiting enzyme in the synthesis of FAD. Essential for TNF-induced reactive oxygen species (ROS) production. Through its interaction with both TNFRSF1A and CYBA, physically and functionally couples TNFRSF1A to NADPH oxidase. TNF-activation of RFK may enhance the incorporation of FAD in NADPH oxidase, a critical step for the assembly and activation of NADPH oxidase. This is Riboflavin kinase (Rfk) from Mus musculus (Mouse).